Here is a 305-residue protein sequence, read N- to C-terminus: Phosphatidate cytidylyltransferase (305 aa).

Helical transmembrane passes span 27-47, 67-87, 96-116, 124-144, 150-170, 202-222, 232-252, and 277-297; these read FLVILLCTSLYPSSAFIVGLL, FPFSFTRYSALGSAIFIALTC, FPEHIDLLPWFFLFFWTIRLV, LGPIGSTGLALFCMLYVSVPI, ILYGFVHTDTPFVGIWWAIFL, TVVGFIAGCCGSILVSLLFYS, IAVPWILIALGTVLGVSGFFG, and MLDVLDSLLLSTPIVYAILLI.

It belongs to the CDS family.

It localises to the cell membrane. The catalysed reaction is a 1,2-diacyl-sn-glycero-3-phosphate + CTP + H(+) = a CDP-1,2-diacyl-sn-glycerol + diphosphate. The protein operates within phospholipid metabolism; CDP-diacylglycerol biosynthesis; CDP-diacylglycerol from sn-glycerol 3-phosphate: step 3/3. In Chlamydia trachomatis serovar D (strain ATCC VR-885 / DSM 19411 / UW-3/Cx), this protein is Phosphatidate cytidylyltransferase (cdsA).